The sequence spans 251 residues: Hydroxyacylglutathione hydrolase (251 aa).

7 residues coordinate Zn(2+): His53, His55, Asp57, His58, His110, Asp127, and His165.

It belongs to the metallo-beta-lactamase superfamily. Glyoxalase II family. In terms of assembly, monomer. Requires Zn(2+) as cofactor.

It catalyses the reaction an S-(2-hydroxyacyl)glutathione + H2O = a 2-hydroxy carboxylate + glutathione + H(+). Its pathway is secondary metabolite metabolism; methylglyoxal degradation; (R)-lactate from methylglyoxal: step 2/2. In terms of biological role, thiolesterase that catalyzes the hydrolysis of S-D-lactoyl-glutathione to form glutathione and D-lactic acid. This chain is Hydroxyacylglutathione hydrolase, found in Shigella dysenteriae serotype 1 (strain Sd197).